The primary structure comprises 315 residues: Aspartate carbamoyltransferase catalytic subunit (315 aa).

The carbamoyl phosphate site is built by Arg55 and Thr56. Lys83 contributes to the L-aspartate binding site. Carbamoyl phosphate contacts are provided by Arg105, His138, and Gln141. L-aspartate-binding residues include Arg171 and Arg225. Residues Gly266 and Pro267 each coordinate carbamoyl phosphate.

It belongs to the aspartate/ornithine carbamoyltransferase superfamily. ATCase family. Heterododecamer (2C3:3R2) of six catalytic PyrB chains organized as two trimers (C3), and six regulatory PyrI chains organized as three dimers (R2).

It catalyses the reaction carbamoyl phosphate + L-aspartate = N-carbamoyl-L-aspartate + phosphate + H(+). It participates in pyrimidine metabolism; UMP biosynthesis via de novo pathway; (S)-dihydroorotate from bicarbonate: step 2/3. Its function is as follows. Catalyzes the condensation of carbamoyl phosphate and aspartate to form carbamoyl aspartate and inorganic phosphate, the committed step in the de novo pyrimidine nucleotide biosynthesis pathway. This is Aspartate carbamoyltransferase catalytic subunit from Mycolicibacterium gilvum (strain PYR-GCK) (Mycobacterium gilvum (strain PYR-GCK)).